Here is a 189-residue protein sequence, read N- to C-terminus: MATNYSANQYEKAYLPTYLQNWSPARPTKEKIAAHEGYTQIIANDRGHLLPSVPRSKASPWGSFMGTWQMPLKIPPAKVTLTARTTTAADNLTKWIHKNPDLLNACNGLRPEISGKPFDPDSQTKQKKSVTKTVQQAPNPTIIPSSPVIQGDNPDEPQSSHPSAGHTPGPQTPVNSPNNPPPSPCKSTK.

The tract at residues 112 to 189 (EISGKPFDPD…PPPSPCKSTK (78 aa)) is disordered. The segment covering 137 to 148 (APNPTIIPSSPV) has biased composition (polar residues). The span at 178–189 (NNPPPSPCKSTK) shows a compositional bias: pro residues.

This sequence belongs to the Flattop family. In terms of assembly, microtubule inner protein component of sperm flagellar doublet microtubules. Interacts with DLG3. In terms of tissue distribution, expressed in mono- and multiciliated tissues during planar cell polarity acquisition.

Its subcellular location is the cytoplasm. It is found in the cytoskeleton. The protein localises to the cilium basal body. It localises to the cilium axoneme. The protein resides in the flagellum axoneme. Its subcellular location is the apical cell membrane. Its function is as follows. Microtubule inner protein (MIP) part of the dynein-decorated doublet microtubules (DMTs) in cilia axoneme. Acts as a regulator of cilium basal body docking and positioning in mono- and multiciliated cells. Regulates basal body docking and cilia formation in multiciliated lung cells. Regulates kinocilium positioning and stereocilia bundle morphogenesis in the inner ear. The polypeptide is Protein Flattop (Mus musculus (Mouse)).